The following is a 305-amino-acid chain: MIKQRTLKRIVQATGVGLHTGKKVTLTLRPAPANTGVIYRRTDLNPPVDFPADAKSVRDTMLCTCLVNEHDVRISTVEHLNAALAGLGIDNIVIEVDAPEIPIMDGSAAPFVYLLLDAGIDELNCAKKFVRIKETVRVEDGDKWAEFKPYNGFTLDFTIDFNHPAIDSSSQRYAMNFSADAFMRQISRARTFGFMRDIEYLQSRGLCLGGSFDCAIVVDDYRVLNEDGLRFEDEFVRHKMLDAIGDLFMCGHNIIGAFTAYKSGHALNNKLLQAVLAKQEAWEYVTFQDDAELPLAFKAPSTVLA.

Residues histidine 79, histidine 238, and aspartate 242 each coordinate Zn(2+). The active-site Proton donor is the histidine 265.

Belongs to the LpxC family. Zn(2+) is required as a cofactor.

The enzyme catalyses a UDP-3-O-[(3R)-3-hydroxyacyl]-N-acetyl-alpha-D-glucosamine + H2O = a UDP-3-O-[(3R)-3-hydroxyacyl]-alpha-D-glucosamine + acetate. Its pathway is glycolipid biosynthesis; lipid IV(A) biosynthesis; lipid IV(A) from (3R)-3-hydroxytetradecanoyl-[acyl-carrier-protein] and UDP-N-acetyl-alpha-D-glucosamine: step 2/6. Catalyzes the hydrolysis of UDP-3-O-myristoyl-N-acetylglucosamine to form UDP-3-O-myristoylglucosamine and acetate, the committed step in lipid A biosynthesis. This chain is UDP-3-O-acyl-N-acetylglucosamine deacetylase, found in Citrobacter koseri (strain ATCC BAA-895 / CDC 4225-83 / SGSC4696).